A 188-amino-acid chain; its full sequence is Elongation factor P (188 aa).

The protein belongs to the elongation factor P family.

Its subcellular location is the cytoplasm. Its pathway is protein biosynthesis; polypeptide chain elongation. Involved in peptide bond synthesis. Stimulates efficient translation and peptide-bond synthesis on native or reconstituted 70S ribosomes in vitro. Probably functions indirectly by altering the affinity of the ribosome for aminoacyl-tRNA, thus increasing their reactivity as acceptors for peptidyl transferase. This chain is Elongation factor P, found in Gemmatimonas aurantiaca (strain DSM 14586 / JCM 11422 / NBRC 100505 / T-27).